The primary structure comprises 96 residues: Uteroglobin (96 aa).

The N-terminal stretch at 1-21 is a signal peptide; it reads MKIAITMAVVMLSVCCSSASS.

This sequence belongs to the secretoglobin family. In terms of assembly, antiparallel homodimer; disulfide-linked. Interaction with LMBR1L is controversial.

It localises to the secreted. Functionally, binds phosphatidylcholine, phosphatidylinositol, polychlorinated biphenyls (PCB) and weakly progesterone, potent inhibitor of phospholipase A2. This chain is Uteroglobin (SCGB1A1), found in Mesocricetus auratus (Golden hamster).